We begin with the raw amino-acid sequence, 244 residues long: Tetraspanin-7 (244 aa).

Topologically, residues 1 to 11 are cytoplasmic; that stretch reads METKPVITCLK. A helical membrane pass occupies residues 12 to 35; the sequence is TLLIIYSFVFWITGVILLAVGVWG. Over 36–51 the chain is Extracellular; that stretch reads KLTLGTYISLIAENST. An N-linked (GlcNAc...) asparagine glycan is attached at asparagine 49. A helical membrane pass occupies residues 52–70; the sequence is NAPYVLIGTGTTIVVFGLF. Residues 71–81 lie on the Cytoplasmic side of the membrane; it reads GCFATCRGSPW. The helical transmembrane segment at 82–107 threads the bilayer; sequence MLKLYAMFLSLVFLAELVAGISGFVF. Residues 108 to 208 are Extracellular-facing; the sequence is RHEIKDTFLR…LVTSFMETNM (101 aa). 4 N-linked (GlcNAc...) asparagine glycosylation sites follow: asparagine 150, asparagine 153, asparagine 172, and asparagine 183. A helical transmembrane segment spans residues 209–229; that stretch reads GIIAGVAFGIAFSQLIGMLLA. At 230-244 the chain is on the cytoplasmic side; the sequence is CCLSRFITANQYEMV.

The protein belongs to the tetraspanin (TM4SF) family.

The protein localises to the membrane. May be involved in cell proliferation and cell motility. In Pan troglodytes (Chimpanzee), this protein is Tetraspanin-7 (TSPAN7).